The sequence spans 861 residues: Leucine--tRNA ligase (861 aa).

The 'HIGH' region motif lies at 42-52 (PYPSGRIHMGH). Positions 623–627 (KMSKS) match the 'KMSKS' region motif. K626 serves as a coordination point for ATP.

Belongs to the class-I aminoacyl-tRNA synthetase family.

The protein localises to the cytoplasm. The enzyme catalyses tRNA(Leu) + L-leucine + ATP = L-leucyl-tRNA(Leu) + AMP + diphosphate. This Caulobacter vibrioides (strain ATCC 19089 / CIP 103742 / CB 15) (Caulobacter crescentus) protein is Leucine--tRNA ligase.